We begin with the raw amino-acid sequence, 340 residues long: Aldo-keto reductase yakc [NADP(+)] (340 aa).

Catalysis depends on tyrosine 56, which acts as the Proton donor. Histidine 126 lines the substrate pocket. Residue 208–218 (APLGRGFLTGA) participates in NADP(+) binding.

Belongs to the aldo/keto reductase family. Aldo/keto reductase 2 subfamily. Monomer.

This Schizosaccharomyces pombe (strain 972 / ATCC 24843) (Fission yeast) protein is Aldo-keto reductase yakc [NADP(+)] (yakc).